The sequence spans 441 residues: Glutamyl-tRNA reductase (441 aa).

Residues 49–52 (TCNR), S110, 115–117 (EPQ), and Q121 contribute to the substrate site. Residue C50 is the Nucleophile of the active site. Residue 190–195 (GAGEMA) coordinates NADP(+).

This sequence belongs to the glutamyl-tRNA reductase family. In terms of assembly, homodimer.

The enzyme catalyses (S)-4-amino-5-oxopentanoate + tRNA(Glu) + NADP(+) = L-glutamyl-tRNA(Glu) + NADPH + H(+). Its pathway is porphyrin-containing compound metabolism; protoporphyrin-IX biosynthesis; 5-aminolevulinate from L-glutamyl-tRNA(Glu): step 1/2. Its function is as follows. Catalyzes the NADPH-dependent reduction of glutamyl-tRNA(Glu) to glutamate 1-semialdehyde (GSA). The sequence is that of Glutamyl-tRNA reductase from Sulfurihydrogenibium sp. (strain YO3AOP1).